The following is a 319-amino-acid chain: tRNA dimethylallyltransferase (319 aa).

15–22 (GPTASGKS) is a binding site for ATP. 17–22 (TASGKS) contributes to the substrate binding site. 2 interaction with substrate tRNA regions span residues 40–43 (DSRQ) and 164–168 (QRLVR).

Belongs to the IPP transferase family. As to quaternary structure, monomer. The cofactor is Mg(2+).

The enzyme catalyses adenosine(37) in tRNA + dimethylallyl diphosphate = N(6)-dimethylallyladenosine(37) in tRNA + diphosphate. Functionally, catalyzes the transfer of a dimethylallyl group onto the adenine at position 37 in tRNAs that read codons beginning with uridine, leading to the formation of N6-(dimethylallyl)adenosine (i(6)A). The sequence is that of tRNA dimethylallyltransferase from Chlorobium phaeobacteroides (strain DSM 266 / SMG 266 / 2430).